A 791-amino-acid polypeptide reads, in one-letter code: Lon protease (791 aa).

A Lon N-terminal domain is found at 3–209 (KPILISRAIV…TILHLLFDQL (207 aa)). 365–372 (GPPGVGKT) contributes to the ATP binding site. The region spanning 605–790 (TTIPGIVNGM…DEVYNIVFGE (186 aa)) is the Lon proteolytic domain. Residues Ser696 and Lys739 contribute to the active site.

Belongs to the peptidase S16 family. As to quaternary structure, homohexamer. Organized in a ring with a central cavity.

It localises to the cytoplasm. The enzyme catalyses Hydrolysis of proteins in presence of ATP.. Its function is as follows. ATP-dependent serine protease that mediates the selective degradation of mutant and abnormal proteins as well as certain short-lived regulatory proteins. Required for cellular homeostasis and for survival from DNA damage and developmental changes induced by stress. Degrades polypeptides processively to yield small peptide fragments that are 5 to 10 amino acids long. Binds to DNA in a double-stranded, site-specific manner. This chain is Lon protease, found in Ureaplasma parvum serovar 3 (strain ATCC 27815 / 27 / NCTC 11736).